The sequence spans 360 residues: Protein Wnt-2 (360 aa).

A signal peptide spans 1–25; that stretch reads MNACLVGIWLWLPLLFTWLSPEVSS. 11 cysteine pairs are disulfide-bonded: Cys-76–Cys-87, Cys-127–Cys-135, Cys-137–Cys-157, Cys-206–Cys-220, Cys-208–Cys-215, Cys-278–Cys-309, Cys-294–Cys-304, Cys-308–Cys-348, Cys-324–Cys-339, Cys-326–Cys-336, and Cys-331–Cys-332. A lipid anchor (O-palmitoleoyl serine; by PORCN) is attached at Ser-212. Residue Asn-295 is glycosylated (N-linked (GlcNAc...) asparagine).

The protein belongs to the Wnt family. In terms of processing, palmitoleoylation is required for efficient binding to frizzled receptors. Depalmitoleoylation leads to Wnt signaling pathway inhibition.

It localises to the secreted. Its subcellular location is the extracellular space. The protein localises to the extracellular matrix. Functionally, ligand for members of the frizzled family of seven transmembrane receptors. Probable developmental protein. May be a signaling molecule which affects the development of discrete regions of tissues. Is likely to signal over only few cell diameters. In Muntiacus muntjak (Barking deer), this protein is Protein Wnt-2 (WNT2).